Here is a 127-residue protein sequence, read N- to C-terminus: Modulator protein MzrA (127 aa).

The Cytoplasmic segment spans residues 1-10; the sequence is MGLQNMTLRR. A helical transmembrane segment spans residues 11–31; that stretch reads FTLSMSALLLLCALLWLWAAL. Topologically, residues 32 to 127 are periplasmic; sequence EQQESSLAIR…RLRDAPHRLG (96 aa).

The protein belongs to the MzrA family. Interacts with EnvZ.

The protein resides in the cell inner membrane. Functionally, modulates the activity of the EnvZ/OmpR two-component regulatory system, probably by directly modulating EnvZ enzymatic activity and increasing stability of phosphorylated OmpR. The sequence is that of Modulator protein MzrA from Enterobacter lignolyticus (strain SCF1).